A 341-amino-acid polypeptide reads, in one-letter code: Phosphoribosylformylglycinamidine cyclo-ligase (341 aa).

It belongs to the AIR synthase family.

It is found in the cytoplasm. The enzyme catalyses 2-formamido-N(1)-(5-O-phospho-beta-D-ribosyl)acetamidine + ATP = 5-amino-1-(5-phospho-beta-D-ribosyl)imidazole + ADP + phosphate + H(+). It functions in the pathway purine metabolism; IMP biosynthesis via de novo pathway; 5-amino-1-(5-phospho-D-ribosyl)imidazole from N(2)-formyl-N(1)-(5-phospho-D-ribosyl)glycinamide: step 2/2. The polypeptide is Phosphoribosylformylglycinamidine cyclo-ligase (Xanthomonas campestris pv. campestris (strain B100)).